Here is a 119-residue protein sequence, read N- to C-terminus: Large ribosomal subunit protein bL20 (119 aa).

This sequence belongs to the bacterial ribosomal protein bL20 family.

Its function is as follows. Binds directly to 23S ribosomal RNA and is necessary for the in vitro assembly process of the 50S ribosomal subunit. It is not involved in the protein synthesizing functions of that subunit. The chain is Large ribosomal subunit protein bL20 from Acidovorax sp. (strain JS42).